A 295-amino-acid chain; its full sequence is Pyridoxal 5'-phosphate synthase subunit PdxS (295 aa).

Asp-25 contacts D-ribose 5-phosphate. Lys-82 acts as the Schiff-base intermediate with D-ribose 5-phosphate in catalysis. Gly-154 contacts D-ribose 5-phosphate. A D-glyceraldehyde 3-phosphate-binding site is contributed by Arg-166. D-ribose 5-phosphate contacts are provided by residues Gly-215 and 236–237; that span reads GS.

The protein belongs to the PdxS/SNZ family. In the presence of PdxT, forms a dodecamer of heterodimers.

The catalysed reaction is aldehydo-D-ribose 5-phosphate + D-glyceraldehyde 3-phosphate + L-glutamine = pyridoxal 5'-phosphate + L-glutamate + phosphate + 3 H2O + H(+). The protein operates within cofactor biosynthesis; pyridoxal 5'-phosphate biosynthesis. Its function is as follows. Catalyzes the formation of pyridoxal 5'-phosphate from ribose 5-phosphate (RBP), glyceraldehyde 3-phosphate (G3P) and ammonia. The ammonia is provided by the PdxT subunit. Can also use ribulose 5-phosphate and dihydroxyacetone phosphate as substrates, resulting from enzyme-catalyzed isomerization of RBP and G3P, respectively. The chain is Pyridoxal 5'-phosphate synthase subunit PdxS from Pasteurella multocida (strain Pm70).